A 365-amino-acid chain; its full sequence is Probable dual-specificity RNA methyltransferase RlmN (365 aa).

Glu99 functions as the Proton acceptor in the catalytic mechanism. The Radical SAM core domain occupies 105–344 (QSYGLSVCVT…CVVRQEHGTD (240 aa)). Cys112 and Cys349 are joined by a disulfide. 3 residues coordinate [4Fe-4S] cluster: Cys119, Cys123, and Cys126. Residues 171-172 (GE), Ser203, 227-229 (SLH), and Asn305 each bind S-adenosyl-L-methionine. Residue Cys349 is the S-methylcysteine intermediate of the active site.

This sequence belongs to the radical SAM superfamily. RlmN family. The cofactor is [4Fe-4S] cluster.

It localises to the cytoplasm. The catalysed reaction is adenosine(2503) in 23S rRNA + 2 reduced [2Fe-2S]-[ferredoxin] + 2 S-adenosyl-L-methionine = 2-methyladenosine(2503) in 23S rRNA + 5'-deoxyadenosine + L-methionine + 2 oxidized [2Fe-2S]-[ferredoxin] + S-adenosyl-L-homocysteine. The enzyme catalyses adenosine(37) in tRNA + 2 reduced [2Fe-2S]-[ferredoxin] + 2 S-adenosyl-L-methionine = 2-methyladenosine(37) in tRNA + 5'-deoxyadenosine + L-methionine + 2 oxidized [2Fe-2S]-[ferredoxin] + S-adenosyl-L-homocysteine. Functionally, specifically methylates position 2 of adenine 2503 in 23S rRNA and position 2 of adenine 37 in tRNAs. The chain is Probable dual-specificity RNA methyltransferase RlmN from Lactococcus lactis subsp. cremoris (strain MG1363).